A 512-amino-acid chain; its full sequence is Kynurenine 3-monooxygenase (512 aa).

Belongs to the aromatic-ring hydroxylase family. KMO subfamily. FAD serves as cofactor.

The protein localises to the mitochondrion outer membrane. It catalyses the reaction L-kynurenine + NADPH + O2 + H(+) = 3-hydroxy-L-kynurenine + NADP(+) + H2O. The protein operates within cofactor biosynthesis; NAD(+) biosynthesis; quinolinate from L-kynurenine: step 1/3. Catalyzes the hydroxylation of L-kynurenine (L-Kyn) to form 3-hydroxy-L-kynurenine (L-3OHKyn). Required for synthesis of quinolinic acid. This is Kynurenine 3-monooxygenase (bna4) from Aspergillus fumigatus (strain ATCC MYA-4609 / CBS 101355 / FGSC A1100 / Af293) (Neosartorya fumigata).